We begin with the raw amino-acid sequence, 486 residues long: Cardiolipin synthase A (486 aa).

The next 2 membrane-spanning stretches (helical) occupy residues 3–23 (TFYT…IAGV) and 38–58 (MAWL…YLSF). 2 consecutive PLD phosphodiesterase domains span residues 219-246 (MDLR…VDPR) and 399-426 (EGGL…DMRS). Residues His-224, Lys-226, Asp-231, His-404, Lys-406, and Asp-411 contribute to the active site.

Belongs to the phospholipase D family. Cardiolipin synthase subfamily. ClsA sub-subfamily.

The protein localises to the cell inner membrane. It carries out the reaction 2 a 1,2-diacyl-sn-glycero-3-phospho-(1'-sn-glycerol) = a cardiolipin + glycerol. Catalyzes the reversible phosphatidyl group transfer from one phosphatidylglycerol molecule to another to form cardiolipin (CL) (diphosphatidylglycerol) and glycerol. This is Cardiolipin synthase A from Klebsiella pneumoniae subsp. pneumoniae (strain ATCC 700721 / MGH 78578).